Here is a 258-residue protein sequence, read N- to C-terminus: tRNA (guanine-N(7)-)-methyltransferase (258 aa).

Residues 1–42 (MPETPLMRDNGPVNHADQDAPAVPEEGQTKDSKGSRLHPRVT) are disordered. 4 residues coordinate S-adenosyl-L-methionine: glutamate 90, glutamate 115, aspartate 142, and aspartate 165. Aspartate 165 is a catalytic residue. Substrate contacts are provided by residues lysine 169, aspartate 201, and 235–238 (TKFE).

Belongs to the class I-like SAM-binding methyltransferase superfamily. TrmB family.

It catalyses the reaction guanosine(46) in tRNA + S-adenosyl-L-methionine = N(7)-methylguanosine(46) in tRNA + S-adenosyl-L-homocysteine. It functions in the pathway tRNA modification; N(7)-methylguanine-tRNA biosynthesis. Catalyzes the formation of N(7)-methylguanine at position 46 (m7G46) in tRNA. This Rhodococcus jostii (strain RHA1) protein is tRNA (guanine-N(7)-)-methyltransferase.